The sequence spans 205 residues: MELNGVRVSRETQGRLQHFAELFQKWAKTINLVAPSTVDDLWRRHIADSAQIFQLHPKPARWVDLGSGGGFPGIITAILLAEQKDGHVDLVESNQKKAAFLRVCLRECEARGAVHAVRIEEAPKIVADCDVISARALAELDMLLDYAAPWVERNENLRLLLHKGRDYEREVHKARGRWEFDLVKHNSVVESDSVILELTRPRRRI.

Residues glycine 66, phenylalanine 71, 119–120, and arginine 135 each bind S-adenosyl-L-methionine; that span reads IE.

It belongs to the methyltransferase superfamily. RNA methyltransferase RsmG family.

It is found in the cytoplasm. The catalysed reaction is guanosine(527) in 16S rRNA + S-adenosyl-L-methionine = N(7)-methylguanosine(527) in 16S rRNA + S-adenosyl-L-homocysteine. Specifically methylates the N7 position of guanine in position 527 of 16S rRNA. This chain is Ribosomal RNA small subunit methyltransferase G, found in Rhizobium rhizogenes (strain K84 / ATCC BAA-868) (Agrobacterium radiobacter).